The primary structure comprises 1356 residues: Pleckstrin homology domain-containing family H member 1 (1356 aa).

Residues 27 to 172 (FRLQASKIRE…QDALEDLRMT (146 aa)) are a coiled coil. 3 disordered regions span residues 179–203 (VVPEGTPERDPVPSGPSDQPVEQDS), 256–314 (HLQK…PKVR), and 354–414 (LHSP…PPLH). Composition is skewed to polar residues over residues 194–203 (PSDQPVEQDS), 256–265 (HLQKEGSPSQ), and 285–297 (VTAQGGTFPGTKT). The stretch at 359-407 (SSKSEARAKVREEAEKMEMEALPPSGKQEERESLKSRRGELEDVELENK) forms a coiled coil. Composition is skewed to basic and acidic residues over residues 362–377 (SEARAKVREEAEKMEM) and 385–399 (KQEERESLKSRRGEL). At serine 451 the chain carries Phosphoserine. 2 consecutive PH domains span residues 572-666 (ALEK…SLLK) and 681-790 (KPTV…VAAG). Serine 739 carries the post-translational modification Phosphoserine. Positions 826 to 980 (YSQEGLCASL…PSRMEVVSIL (155 aa)) constitute a MyTH4 domain. Residues 991–1327 (FSIPVHFANG…NHCSATVNLS (337 aa)) enclose the FERM domain.

This chain is Pleckstrin homology domain-containing family H member 1 (Plekhh1), found in Mus musculus (Mouse).